Here is a 210-residue protein sequence, read N- to C-terminus: Na(+)-translocating NADH-quinone reductase subunit D (210 aa).

6 helical membrane passes run 14–34 (PIVN…ALAV), 42–62 (LVMA…ISMI), 72–92 (IIVQ…LLQA), 103–123 (VFVG…AYAM), 131–151 (FMDG…VGFV), and 178–198 (NGLL…IWII).

The protein belongs to the NqrDE/RnfAE family. In terms of assembly, composed of six subunits; NqrA, NqrB, NqrC, NqrD, NqrE and NqrF.

Its subcellular location is the cell inner membrane. The catalysed reaction is a ubiquinone + n Na(+)(in) + NADH + H(+) = a ubiquinol + n Na(+)(out) + NAD(+). Functionally, NQR complex catalyzes the reduction of ubiquinone-1 to ubiquinol by two successive reactions, coupled with the transport of Na(+) ions from the cytoplasm to the periplasm. NqrA to NqrE are probably involved in the second step, the conversion of ubisemiquinone to ubiquinol. The chain is Na(+)-translocating NADH-quinone reductase subunit D from Shewanella oneidensis (strain ATCC 700550 / JCM 31522 / CIP 106686 / LMG 19005 / NCIMB 14063 / MR-1).